Reading from the N-terminus, the 1788-residue chain is MLELRLIVVIVLALLSWQWDPVDSQRPPQHGRRDRPKYPPNKFIKTHPCERSSCYPATGNLLIGRENRLTASSTCGLHSPERFCILSHLQDKKCFLCDTREETKHDPYKNHRIGQIIYKTKPGTNIPTWWQSENGKENATIQLDLEAEFHFTHLIITFTTFRPAAMYIERSFDFGQTWHIYRYFAYDCKESFPGVPTVLENITDVMCTSRYSNVEPSRNGEVIFRVLPPNINVTDPYAEHVQNQLKMTNLRIQMTKLHKLGDNLLDSRLENEEKYYYGISNMVVRGSCSCYGHASQCLPLDPAFSQADNEDGMVHGRCECTHNTKGMNCEECEDFFNDLPWKPAFGKKTNACKKCECNDHAVSCHFDEAVFTASGFVSGGVCDNCLHNTRGQHCEECMPYFYRDPEQDITSERVCQPCDCDPQGSSDDGICDSLNELEEGAVAGACHCKAFVTGRRCNQCKDGYWNLQSDNPEGCEPCTCNPLGTLNNSGCVMRTGECKCKKYVTGKDCNQCMPETYGLSESPEGCSLCNCDAGGSYDNYCDVISGQCRCRPHMTGRSCSQPKQNYFIPLLPEVHEAEVVDECISYGANGNCSLVAETPDGSFTGIGFTRVPENSELVFTVGDIPRSMPYDAVIRYQSTSRGDWENAFITLVRPDQVDPEGGCGELAAATSSETRIPFSLPDRSRQVVALNEVCLEAGKVYKFRIYFERKRHDVDSPTATILVDSLTLIPRIDVTPIFQGSVLADIRKKDYEKYNCKSSLYDMNYKSDPKCQNLDNILSVFVHDGASMCNCNPTGSLSKVCESNGGYCQCKPNVVGRQCDQCAPGTYGFGPEGCKACDCNSIGSKDKYCDLITGQCQCVPNTYGRECNQCQPGYWNFPECRVCQCNGHAATCDPIQGTCIDCQDSTTGYSCDSCLDGYYGNPLFGSEIGCRPCRCPETVASGLAHADGCSLDTRNNNMLCHCQEGYSGSRCEICADNFFGNPDNGGTCSKCECSNNVDLYDTGNCDRQTGACLKCLYQTTGDHCELCKDGFFGDALQQNCQQCECDFLGTNNTIAHCDRFTGQCPCLPNVQGVRCDQCAENHWKIASGEGCESCNCDPIGALHEQCNSYTGQCQCKPGFGGRACNQCQAHYWGNPNEKCQPCECDQFGAADFQCDRETGNCVCHEGIGGYKCNECARGYIGQFPHCSPCGECFNNWDLILSALEDATTATILRAKEIKQVGATGAYTSEFSELDKKLQHIRNLLQNTSVSLVDIEKLDYETQSLRDQLQASHGRLSETEQNLDDIYNSLSLSGVELESLQNHSRLVQQLSKELKENGIQLQESNIEGALNLTRHAYERVSNLSTLKDEANELASNTDRNCKRVENLSNKIQAEADDLANNNKLIEDYRAELTSLTSQIPELNNQVCGKPGDPCDSLCGGAGCGHCGGFLSCEHGAKTHSEEALKVAKDAETAITSKKDQADQTIRALTQAKLNASEAYEKAKRGFEQSERYLNQTNANIKLAENLFIALNNFQENKTASPSESKELAQKTLDLDLKLEPEEIETLGDQINRAVSSLKNVEAIIYRTKPDLDRVNNLQSIANATKEKADKILDSANSVVESLAAADESQGKAKDAIQQANSNIELAGQDLEKIDEETYSAEAPANNTAQQVEKLAKKVQKLQNNIMKNDRDAKEITKEAGSVKLEAMRARGEANNLQSATSATNQTLTDRASRSENARERAKQLLQRASKLTVDTNAKLKDLNDLQTVYLNKNQQLLRLQAEIGPLNKELNEHLIHIKERGSHYRQCYT.

The signal sequence occupies residues 1-24 (MLELRLIVVIVLALLSWQWDPVDS). Positions 23 to 43 (DSQRPPQHGRRDRPKYPPNKF) are disordered. Residues 50–287 (ERSSCYPATG…GISNMVVRGS (238 aa)) enclose the Laminin N-terminal domain. Asn138, Asn201, and Asn232 each carry an N-linked (GlcNAc...) asparagine glycan. 19 disulfide bridges follow: Cys288/Cys297, Cys290/Cys318, Cys320/Cys329, Cys332/Cys352, Cys355/Cys364, Cys357/Cys382, Cys385/Cys394, Cys397/Cys415, Cys418/Cys431, Cys420/Cys446, Cys448/Cys457, Cys460/Cys475, Cys478/Cys491, Cys480/Cys498, Cys500/Cys509, Cys512/Cys526, Cys529/Cys541, Cys531/Cys548, and Cys550/Cys559. 4 Laminin EGF-like domains span residues 288–354 (CSCY…ACKK), 355–417 (CECN…VCQP), 418–477 (CDCD…GCEP), and 478–528 (CTCN…GCSL). A glycan (N-linked (GlcNAc...) asparagine) is linked at Asn487. Residues 529–559 (CNCDAGGSYDNYCDVISGQCRCRPHMTGRSC) enclose the Laminin EGF-like 5; truncated domain. The Laminin IV type B domain maps to 567–783 (FIPLLPEVHE…LDNILSVFVH (217 aa)). N-linked (GlcNAc...) asparagine glycosylation occurs at Asn591. A Cell attachment site motif is present at residues 641–643 (RGD). Disulfide bonds link Cys789–Cys801, Cys791–Cys808, Cys810–Cys819, Cys822–Cys834, Cys837–Cys849, Cys839–Cys856, Cys858–Cys867, Cys870–Cys880, Cys883–Cys892, Cys885–Cys899, Cys902–Cys911, Cys914–Cys930, Cys933–Cys949, Cys935–Cys960, Cys962–Cys971, Cys974–Cys988, Cys991–Cys1005, Cys993–Cys1012, Cys1015–Cys1024, Cys1027–Cys1040, Cys1043–Cys1057, Cys1045–Cys1064, Cys1066–Cys1075, Cys1078–Cys1091, Cys1094–Cys1106, Cys1096–Cys1113, Cys1115–Cys1124, Cys1127–Cys1139, Cys1142–Cys1154, Cys1144–Cys1161, Cys1163–Cys1172, and Cys1175–Cys1186. 8 consecutive Laminin EGF-like domains span residues 789–836 (CNCN…GCKA), 837–882 (CDCN…ECRV), 883–932 (CQCN…GCRP), 933–990 (CRCP…TCSK), 991–1042 (CECS…NCQQ), 1043–1093 (CECD…GCES), 1094–1141 (CNCD…KCQP), and 1142–1188 (CECD…HCSP). Residue Asn1051 is glycosylated (N-linked (GlcNAc...) asparagine). Residues 1189-1405 (CGECFNNWDL…SQIPELNNQV (217 aa)) form a domain II region. Asn1246, Asn1301, Asn1330, and Asn1341 each carry an N-linked (GlcNAc...) asparagine glycan. Residues 1255 to 1405 (EKLDYETQSL…SQIPELNNQV (151 aa)) are a coiled coil. The tract at residues 1406–1432 (CGKPGDPCDSLCGGAGCGHCGGFLSCE) is domain alpha. The domain I stretch occupies residues 1433 to 1788 (HGAKTHSEEA…RGSHYRQCYT (356 aa)). The stretch at 1453–1505 (ITSKKDQADQTIRALTQAKLNASEAYEKAKRGFEQSERYLNQTNANIKLAENL) forms a coiled coil. 3 N-linked (GlcNAc...) asparagine glycosylation sites follow: Asn1473, Asn1493, and Asn1515. Residues 1540–1561 (EEIETLGDQINRAVSSLKNVEA) are a coiled coil. Residues Asn1581, Asn1644, and Asn1703 are each glycosylated (N-linked (GlcNAc...) asparagine). Residues 1608–1762 (QGKAKDAIQQ…QQLLRLQAEI (155 aa)) are a coiled coil. Residues 1690–1719 (GEANNLQSATSATNQTLTDRASRSENARER) form a disordered region. The segment covering 1693-1708 (NNLQSATSATNQTLTD) has biased composition (polar residues). Over residues 1709–1719 (RASRSENARER) the composition is skewed to basic and acidic residues.

Laminin is a complex glycoprotein, consisting of three different polypeptide chains (alpha, beta, gamma), which are bound to each other by disulfide bonds into a cross-shaped molecule comprising one long and three short arms with globules at each end. As to expression, found in the basement membranes (major component).

It is found in the secreted. The protein resides in the extracellular space. Its subcellular location is the extracellular matrix. The protein localises to the basement membrane. Functionally, binding to cells via a high affinity receptor, laminin is thought to mediate the attachment, migration and organization of cells into tissues during embryonic development by interacting with other extracellular matrix components. Required for Ndg localization to the basement membrane. This chain is Laminin subunit beta-1 (LanB1), found in Drosophila melanogaster (Fruit fly).